The primary structure comprises 309 residues: Olfactory receptor 6C4 (309 aa).

The Extracellular segment spans residues 1–23 (MKNRTMFGEFILLGLTNQPELQV). Asn-3 is a glycosylation site (N-linked (GlcNAc...) asparagine). The chain crosses the membrane as a helical span at residues 24–44 (MIFIFLFLTYMLSILGNLTII). The Cytoplasmic segment spans residues 45–52 (TLTLLDPH). Residues 53–73 (LQTPMYFFLRNFSFLEISFTS) traverse the membrane as a helical segment. Residues 74–97 (IFIPRFLTSMTTGNKVISFAGCLT) are Extracellular-facing. The cysteines at positions 95 and 187 are disulfide-linked. A helical membrane pass occupies residues 98–118 (QYFFAIFLGATEFYLLASMSY). At 119 to 137 (DRYVAICKPLHYLTIMSSR) the chain is on the cytoplasmic side. The helical transmembrane segment at 138–158 (VCIQLVFCSWLGGFLAILPPI) threads the bilayer. At 159–195 (ILMTQVDFCVSNILNHYYCDYGPLVELACSDTSLLEL) the chain is on the extracellular side. The chain crosses the membrane as a helical span at residues 196-215 (MVILLAVVTLMVTLVLVTLS). The Cytoplasmic segment spans residues 216 to 235 (YTYIIRTILRIPSAQQRTKA). The helical transmembrane segment at 236 to 256 (FSTCSSHMIVISLSYGSCMFM) threads the bilayer. The Extracellular segment spans residues 257 to 269 (YINPSAKEGGAFN). A helical membrane pass occupies residues 270–290 (KGIAVLITSVTPLLNPFIYTL). Over 291–309 (RNQQVKQAFKDSVKKIVKL) the chain is Cytoplasmic.

The protein belongs to the G-protein coupled receptor 1 family.

Its subcellular location is the cell membrane. In terms of biological role, odorant receptor. This chain is Olfactory receptor 6C4 (OR6C4), found in Homo sapiens (Human).